The primary structure comprises 103 residues: Matrix Gla protein (103 aa).

A signal peptide spans 1–19; it reads MKSLILLAILAALAVVTLC. The residue at position 21 (E21) is a 4-carboxyglutamate. Phosphoserine is present on residues S22, S25, and S28. A Gla domain is found at 51-97; the sequence is RAKVQERIRERSKPVHELNREACDDYRLCERYAMVYGYNAAYNRYFR. 4-carboxyglutamate occurs at positions 56, 60, 67, and 71. C73 and C79 are disulfide-bonded. Residues 97–103 constitute a propeptide, removed in mature form; probably by carboxypeptidase N; sequence RKRRGTK.

Belongs to the osteocalcin/matrix Gla protein family. Requires vitamin K-dependent gamma-carboxylation for its function.

It is found in the secreted. Associates with the organic matrix of bone and cartilage. Thought to act as an inhibitor of bone formation. In Homo sapiens (Human), this protein is Matrix Gla protein (MGP).